Reading from the N-terminus, the 266-residue chain is Ribosomal RNA small subunit methyltransferase A (266 aa).

S-adenosyl-L-methionine contacts are provided by N11, L13, G37, E57, D85, and N104.

Belongs to the class I-like SAM-binding methyltransferase superfamily. rRNA adenine N(6)-methyltransferase family. RsmA subfamily.

The protein resides in the cytoplasm. The catalysed reaction is adenosine(1518)/adenosine(1519) in 16S rRNA + 4 S-adenosyl-L-methionine = N(6)-dimethyladenosine(1518)/N(6)-dimethyladenosine(1519) in 16S rRNA + 4 S-adenosyl-L-homocysteine + 4 H(+). Its function is as follows. Specifically dimethylates two adjacent adenosines (A1518 and A1519) in the loop of a conserved hairpin near the 3'-end of 16S rRNA in the 30S particle. May play a critical role in biogenesis of 30S subunits. The polypeptide is Ribosomal RNA small subunit methyltransferase A (Campylobacter jejuni subsp. jejuni serotype O:2 (strain ATCC 700819 / NCTC 11168)).